Consider the following 306-residue polypeptide: Small ribosomal subunit protein uS2 (306 aa).

Residues 257–306 (EGDKKDETAAAAEVQTSAETEKVADAEKPAEAVAEAEAEAPAADADAEQA) form a disordered region. Residues 275 to 286 (ETEKVADAEKPA) show a composition bias toward basic and acidic residues. Residues 287-300 (EAVAEAEAEAPAAD) show a composition bias toward low complexity.

The protein belongs to the universal ribosomal protein uS2 family.

This chain is Small ribosomal subunit protein uS2, found in Streptomyces griseus subsp. griseus (strain JCM 4626 / CBS 651.72 / NBRC 13350 / KCC S-0626 / ISP 5235).